A 355-amino-acid chain; its full sequence is Glucokinase (355 aa).

Residue 11–16 coordinates ATP; the sequence is GDIGGT.

Belongs to the bacterial glucokinase family.

It is found in the cytoplasm. The enzyme catalyses D-glucose + ATP = D-glucose 6-phosphate + ADP + H(+). This Synechocystis sp. (strain ATCC 27184 / PCC 6803 / Kazusa) protein is Glucokinase.